The following is a 376-amino-acid chain: Galactoside alpha-(1,2)-fucosyltransferase 1 (376 aa).

Residues 1–12 (MWTPSRKQLCLA) lie on the Cytoplasmic side of the membrane. The chain crosses the membrane as a helical; Signal-anchor for type II membrane protein span at residues 13–29 (FLSVCVLSAGSFFFHLN). Over 30-376 (GGNFFQNALT…WETDSLFRLA (347 aa)) the chain is Lumenal. Residues asparagine 64, asparagine 302, and asparagine 328 are each glycosylated (N-linked (GlcNAc...) asparagine).

It belongs to the glycosyltransferase 11 family.

It localises to the golgi apparatus. It is found in the golgi stack membrane. It catalyses the reaction a beta-D-galactosyl-(1-&gt;4)-N-acetyl-beta-D-glucosaminyl derivative + GDP-beta-L-fucose = an alpha-L-Fuc-(1-&gt;2)-beta-D-Gal-(1-&gt;4)-beta-D-GlcNAc derivative + GDP + H(+). The catalysed reaction is a ganglioside GA1 + GDP-beta-L-fucose = a ganglioside Fuc-GA1 + GDP + H(+). The enzyme catalyses a beta-D-Gal-(1-&gt;3)-beta-D-GlcNAc-(1-&gt;3)-beta-D-Gal-(1-&gt;4)-beta-D-Glc-(1&lt;-&gt;1')-Cer(d18:1(4E)) + GDP-beta-L-fucose = alpha-L-fucosyl-(1-&gt;2)- beta-D-galactosyl-(1-&gt;3)-N-acetyl-beta-D-glucosaminyl-(1-&gt;3)-beta-D-galactosyl-(1-&gt;4)-beta-D-glucosyl-(1&lt;-&gt;1')-N-acylsphing-4-enine + GDP + H(+). It carries out the reaction a neolactoside nLc4Cer(d18:1(4E)) + GDP-beta-L-fucose = a neolactoside IV(2)-alpha-Fuc-nLc4Cer(d18:1(4E)) + GDP + H(+). It catalyses the reaction a ganglioside GM1 + GDP-beta-L-fucose = a ganglioside Fuc-GM1 + GDP + H(+). The catalysed reaction is beta-D-galactosyl-(1-&gt;3)-N-acetyl-D-galactosamine + GDP-beta-L-fucose = alpha-L-fucosyl-(1-&gt;2)-beta-D-galactosyl-(1-&gt;3)-N-acetyl-D-galactosamine + GDP + H(+). It functions in the pathway protein modification; protein glycosylation. In terms of biological role, catalyzes the transfer of L-fucose, from a guanosine diphosphate-beta-L-fucose, to the terminal galactose residue of glycoconjugates through an alpha(1,2) linkage leading to H antigen synthesis that is an intermediate substrate in the synthesis of ABO blood group antigens. H antigen is essential for maturation of the glomerular layer of the main olfactory bulb, in cell migration and early cell-cell contacts during tumor associated angiogenesis. Preferentially fucosylates soluble lactose and to a lesser extent fucosylates glycolipids gangliosides GA1 and GM1a. This chain is Galactoside alpha-(1,2)-fucosyltransferase 1, found in Rattus norvegicus (Rat).